The sequence spans 326 residues: MKKNYYALAYYYLTRVDNPQQEIALHKELFKDLDVSCRIYISEQGINGQFSGYQPDAEYYMNWLRQRPGFSNVKFKIHHIEENIFPRVTVKYRKELVALGCDVDLSNQGKHISPQEWHEKLEENRCLVLDVRNNYEWKIGHFENAVLPDIRTFREFPDYAEQLSKEHDPATTPVMMYCTGGIRCELYSSLLLEKGFKEVYQLDGGVIAYGQAVGTGKWRGKLFVFDDRLAVPIDEADTDVPPIASCSHCETPCDTYYNCANTDCNNLFICCKECIHSTKGCCSQECSQAPRIRSFAPCRGNKPFRRMHLCEVTKEKEEAASSCCLH.

A Rhodanese domain is found at 122–218 (EENRCLVLDV…YGQAVGTGKW (97 aa)). Cys178 acts as the Cysteine persulfide intermediate in catalysis.

This sequence belongs to the TrhO family.

The catalysed reaction is uridine(34) in tRNA + AH2 + O2 = 5-hydroxyuridine(34) in tRNA + A + H2O. Functionally, catalyzes oxygen-dependent 5-hydroxyuridine (ho5U) modification at position 34 in tRNAs. The polypeptide is tRNA uridine(34) hydroxylase (Chlamydia abortus (strain DSM 27085 / S26/3) (Chlamydophila abortus)).